Reading from the N-terminus, the 446-residue chain is MVEPGNLAGATGAEWIGRPPHEELQRKVRPLLPSDDPFYFPPAGYQHAVPGTVLRSRDVELAFMGLIPQPVTATQLLYRTTNMYGNPEATVTTVIVPAELAPGQTCPLLSYQCAIDAMSSRCFPSYALRRRAKALGSLTQMELLMISAALAEGWAVSVPDHEGPKGLWGSPYEPGYRVLDGIRAALNSERVGLSPATPIGLWGYSGGGLASAWAAEACGEYAPDLDIVGAVLGSPVGDLGHTFRRLNGTLLAGLPALVVAALQHSYPGLARVIKEHANDEGRQLLEQLTEMTTVDAVIRMAGRDMGDFLDEPLEDILSTPEVSHVFGDTKLGSAVPTPPVLIVQAVHDYLIDVSDIDALADSYTAGGANVTYHRDLFSEHVSLHPLSAPMTLRWLTDRFAGKPLTDHRVRTTWPTIFNPMTYAGMARLAVIAAKVITGRKLSRRPL.

The protein belongs to the AB hydrolase superfamily. Lipase family.

In Mycobacterium tuberculosis (strain CDC 1551 / Oshkosh), this protein is Probable inactive lipase MT1628.